The chain runs to 269 residues: Formamidopyrimidine-DNA glycosylase (269 aa).

Proline 2 (schiff-base intermediate with DNA) is an active-site residue. Glutamate 3 serves as the catalytic Proton donor. Lysine 57 serves as the catalytic Proton donor; for beta-elimination activity. DNA contacts are provided by histidine 90, arginine 109, and lysine 150. Residues 235-269 form an FPG-type zinc finger; sequence QVYGRKGEPCRVCGTPIVATKHAQRATFYCRQCQK. The active-site Proton donor; for delta-elimination activity is arginine 259.

The protein belongs to the FPG family. Monomer. Requires Zn(2+) as cofactor.

It catalyses the reaction Hydrolysis of DNA containing ring-opened 7-methylguanine residues, releasing 2,6-diamino-4-hydroxy-5-(N-methyl)formamidopyrimidine.. It carries out the reaction 2'-deoxyribonucleotide-(2'-deoxyribose 5'-phosphate)-2'-deoxyribonucleotide-DNA = a 3'-end 2'-deoxyribonucleotide-(2,3-dehydro-2,3-deoxyribose 5'-phosphate)-DNA + a 5'-end 5'-phospho-2'-deoxyribonucleoside-DNA + H(+). Involved in base excision repair of DNA damaged by oxidation or by mutagenic agents. Acts as a DNA glycosylase that recognizes and removes damaged bases. Has a preference for oxidized purines, such as 7,8-dihydro-8-oxoguanine (8-oxoG). Has AP (apurinic/apyrimidinic) lyase activity and introduces nicks in the DNA strand. Cleaves the DNA backbone by beta-delta elimination to generate a single-strand break at the site of the removed base with both 3'- and 5'-phosphates. This chain is Formamidopyrimidine-DNA glycosylase, found in Shigella dysenteriae serotype 1 (strain Sd197).